Here is a 545-residue protein sequence, read N- to C-terminus: Periplasmic trehalase (545 aa).

Residues 1-30 form the signal peptide; the sequence is MPDRTALPRAMLAAWVLLLLAACSQGPAPT. Substrate contacts are provided by residues Arg-160, 167 to 168, Asn-204, 213 to 215, 285 to 287, and Gly-318; these read WD, RSQ, and RQE. Active-site proton donor/acceptor residues include Asp-320 and Glu-503. Position 518 (Glu-518) interacts with substrate.

It belongs to the glycosyl hydrolase 37 family.

Its subcellular location is the periplasm. The catalysed reaction is alpha,alpha-trehalose + H2O = alpha-D-glucose + beta-D-glucose. In terms of biological role, provides the cells with the ability to utilize trehalose at high osmolarity by splitting it into glucose molecules that can subsequently be taken up by the phosphotransferase-mediated uptake system. The sequence is that of Periplasmic trehalase from Pseudomonas aeruginosa (strain ATCC 15692 / DSM 22644 / CIP 104116 / JCM 14847 / LMG 12228 / 1C / PRS 101 / PAO1).